Here is a 418-residue protein sequence, read N- to C-terminus: MNIFEELKARGLVFQTTDEQALVKALTEGQVSYYTGYDPTADSLHLGHLVAILTSRRLQLAGHKPYALVGGATGLIGDPSFKDAERSLQTKETVLEWSDKIKGQLSTFLDFENGDNKAELVNNYDWFSQISFIDFLRDVGKYFTVNYMMSKDSVKKRIETGISYTEFAYQIMQGYDFYELNDKHNVTLQIGGSDQWGNMTAGTELLRKKADKTGHVMTVPLITDSTGKKFGKSEGNAVWLDADKTSPYEMYQFWLNVMDDDAVRFLKIFTFLSLDEIAEIESQFNAARHERLAQKTLAREVVTLVHGEEAYKQALNITEQLFAGNIKNLSANELKQGLSNVPNYHVQSEDSLNLVDMLVTAGISPSKRQAREDVQNGAIYINGDRIQDLDYQLSNDDKIDDQLTVIRRGKKKYAVLTY.

An L-tyrosine-binding site is contributed by Tyr34. A 'HIGH' region motif is present at residues 39–48 (PTADSLHLGH). Tyr169 and Gln173 together coordinate L-tyrosine. Positions 229 to 233 (KFGKS) match the 'KMSKS' region motif. Lys232 contacts ATP. Residues 352–418 (LNLVDMLVTA…GKKKYAVLTY (67 aa)) form the S4 RNA-binding domain.

It belongs to the class-I aminoacyl-tRNA synthetase family. TyrS type 1 subfamily. Homodimer.

It is found in the cytoplasm. The enzyme catalyses tRNA(Tyr) + L-tyrosine + ATP = L-tyrosyl-tRNA(Tyr) + AMP + diphosphate + H(+). Catalyzes the attachment of tyrosine to tRNA(Tyr) in a two-step reaction: tyrosine is first activated by ATP to form Tyr-AMP and then transferred to the acceptor end of tRNA(Tyr). This chain is Tyrosine--tRNA ligase, found in Streptococcus pyogenes serotype M3 (strain SSI-1).